Consider the following 460-residue polypeptide: MGKEDKAHINVVVIGHVDSGKSTTTGHLIYKCGGIDKRTIEKFEKEAAELGKGSFKYAWVLDKLKAERERGITIDIALWKFETPKYYVTVIDAPGHRDFIKNMITGTSQADCAILIIAAGTGEFEAGISKDGQTREHALLAYTLGVKQLIVAINKMDTTQWSQARFEEIIKETKNFIKKVGYNPATVAFVPISGFNGDNMLEASTNCPWYKGWEKETKAGKSTGKTLLEAIDAIEQPKRPTDKPLRLPLQDVYKIGGIGTVPVGRIETGVLKPGMVVTFAPSNVTTEVKSVEMHHEQLAQGVPGDNVGFNVKNVSVKDIRRGNVAGDSKNDPPVGAASFTAQVIVLNHPGQVGAGYAPVLDCHTAHIACKFAELLEKIDRRTGKAVETSPKFIKSGDAAIVKMIPSKPMCVEAFTDYPPLGRFAVRDMRQTVAVGVIKAVDKTQAVAGKVTKSAAKAAKK.

N,N,N-trimethylglycine is present on Gly2. An N6,N6-dimethyllysine; alternate modification is found at Lys3. An N6-methyllysine; alternate modification is found at Lys3. The tr-type G domain maps to 6-241 (KAHINVVVIG…DAIEQPKRPT (236 aa)). The interval 15–22 (GHVDSGKS) is G1. 15–22 (GHVDSGKS) is a binding site for GTP. Residue Lys31 is modified to N6-methyllysine. Positions 71 to 75 (GITID) are G2. Lys80 is subject to N6,N6,N6-trimethyllysine. The segment at 92-95 (DAPG) is G3. Residues 92–96 (DAPGH) and 154–157 (NKMD) each bind GTP. Positions 154-157 (NKMD) are G4. A G5 region spans residues 193-195 (SGF). Lys317 bears the N6,N6-dimethyllysine; alternate mark. Lys317 is subject to N6-methyllysine; alternate. Lys391 is subject to N6-methyllysine.

It belongs to the TRAFAC class translation factor GTPase superfamily. Classic translation factor GTPase family. EF-Tu/EF-1A subfamily.

Its subcellular location is the cytoplasm. Its function is as follows. This protein promotes the GTP-dependent binding of aminoacyl-tRNA to the A-site of ribosomes during protein biosynthesis. The sequence is that of Elongation factor 1-alpha (TEF) from Sordaria macrospora.